A 288-amino-acid chain; its full sequence is Orotidine 5'-phosphate decarboxylase (288 aa).

Lys-97 functions as the Proton donor in the catalytic mechanism.

Belongs to the OMP decarboxylase family. Type 2 subfamily.

The enzyme catalyses orotidine 5'-phosphate + H(+) = UMP + CO2. It participates in pyrimidine metabolism; UMP biosynthesis via de novo pathway; UMP from orotate: step 2/2. The protein is Orotidine 5'-phosphate decarboxylase of Clostridium tetani (strain Massachusetts / E88).